Reading from the N-terminus, the 245-residue chain is 5-oxoprolinase subunit A (245 aa).

The protein belongs to the LamB/PxpA family. In terms of assembly, forms a complex composed of PxpA, PxpB and PxpC.

The enzyme catalyses 5-oxo-L-proline + ATP + 2 H2O = L-glutamate + ADP + phosphate + H(+). Functionally, catalyzes the cleavage of 5-oxoproline to form L-glutamate coupled to the hydrolysis of ATP to ADP and inorganic phosphate. The polypeptide is 5-oxoprolinase subunit A (Yersinia enterocolitica serotype O:8 / biotype 1B (strain NCTC 13174 / 8081)).